The sequence spans 212 residues: uncharacterized protein (212 aa).

Transmembrane regions (helical) follow at residues 54 to 74 and 79 to 99; these read LCFA…GYAG and WIIC…ALLL.

The protein localises to the cell membrane. This is an uncharacterized protein from Chlamydia pneumoniae (Chlamydophila pneumoniae).